A 597-amino-acid chain; its full sequence is mRNA-capping enzyme (597 aa).

The segment at 1–212 is TPase; sequence MAYNKIPPRW…DEDGKKDSEP (212 aa). A Tyrosine-protein phosphatase domain is found at 25 to 183; the sequence is LPLKTMLGPR…FRRYGDIEEA (159 aa). Cys126 functions as the Phosphocysteine intermediate in the catalytic mechanism. The segment at 181–221 is disordered; that stretch reads EEAPPPPVLPDWCFEDEDEEDEDEDGKKDSEPGSSASFSKR. A compositionally biased stretch (acidic residues) spans 193–204; it reads CFEDEDEEDEDE. The interval 229 to 597 is GTase; sequence GAIFLEGITV…PPPKRLHRPT (369 aa). The active-site N6-GMP-lysine intermediate is Lys294. GTP contacts are provided by residues Arg299, Arg315, 343–345, 458–460, and 528–533; these read DGE, KWK, and RQRIDK. Residues 330 to 386 are interaction with POLR2A; sequence RKDLRMHLSNTLLDGEMIIDKVNGQAVPRYLIYDIIKFNAQPVGDCDFNIRLQCIER. Residues 573–597 are disordered; that stretch reads KRKYPLDPDTELMPPPPPKRLHRPT.

This sequence in the N-terminal section; belongs to the non-receptor class of the protein-tyrosine phosphatase family. In the C-terminal section; belongs to the eukaryotic GTase family. Interacts with SUPT5H and RNMT. Interacts with POLR2A (via C-terminus); this enhances guanylyltransferase activity. Binds (via GTase domain) to the elongating phosphorylated form of RNA polymerase II; can form direct interactions with the phosphorylated POLR2A C-terminal domain and indirect interactions via bound RNA.

It localises to the nucleus. The catalysed reaction is a 5'-end triphospho-ribonucleoside in mRNA + H2O = a 5'-end diphospho-ribonucleoside in mRNA + phosphate + H(+). It catalyses the reaction a 5'-end diphospho-ribonucleoside in mRNA + GTP + H(+) = a 5'-end (5'-triphosphoguanosine)-ribonucleoside in mRNA + diphosphate. Its activity is regulated as follows. RNA triphosphatase activity is inhibited by vanadate, iodoacetate and magnesium. Functionally, bifunctional mRNA-capping enzyme exhibiting RNA 5'-triphosphate monophosphatase activity in the N-terminal part and mRNA guanylyltransferase activity in the C-terminal part. Catalyzes the first two steps of cap formation: by removing the gamma-phosphate from the 5'-triphosphate end of nascent mRNA to yield a diphosphate end, and by transferring the GMP moiety of GTP to the 5'-diphosphate terminus of RNA via a covalent enzyme-GMP reaction intermediate. This Mus musculus (Mouse) protein is mRNA-capping enzyme (Rngtt).